Consider the following 163-residue polypeptide: Large ribosomal subunit protein uL15 (163 aa).

Residues 1–29 (MSKKRRQRGSRTHGGGSHKNRRGAGHRGG) show a composition bias toward basic residues. Disordered stretches follow at residues 1 to 59 (MSKK…KTRR) and 135 to 163 (VADG…DEES). 2 stretches are compositionally biased toward basic and acidic residues: residues 33–46 (AGRD…HEPL) and 142–154 (LSER…AEKD).

This sequence belongs to the universal ribosomal protein uL15 family. Part of the 50S ribosomal subunit.

Binds to the 23S rRNA. This chain is Large ribosomal subunit protein uL15, found in Natronomonas pharaonis (strain ATCC 35678 / DSM 2160 / CIP 103997 / JCM 8858 / NBRC 14720 / NCIMB 2260 / Gabara) (Halobacterium pharaonis).